Reading from the N-terminus, the 518-residue chain is Glutamate--cysteine ligase (518 aa).

It belongs to the glutamate--cysteine ligase type 1 family. Type 1 subfamily.

It carries out the reaction L-cysteine + L-glutamate + ATP = gamma-L-glutamyl-L-cysteine + ADP + phosphate + H(+). It functions in the pathway sulfur metabolism; glutathione biosynthesis; glutathione from L-cysteine and L-glutamate: step 1/2. The protein is Glutamate--cysteine ligase of Salmonella arizonae (strain ATCC BAA-731 / CDC346-86 / RSK2980).